The chain runs to 99 residues: Signal recognition particle 19 kDa protein (99 aa).

Belongs to the SRP19 family. Part of the signal recognition particle protein translocation system, which is composed of SRP and FtsY. Archaeal SRP consists of a 7S RNA molecule of 300 nucleotides and two protein subunits: SRP54 and SRP19.

The protein resides in the cytoplasm. In terms of biological role, involved in targeting and insertion of nascent membrane proteins into the cytoplasmic membrane. Binds directly to 7S RNA and mediates binding of the 54 kDa subunit of the SRP. This chain is Signal recognition particle 19 kDa protein, found in Pyrococcus horikoshii (strain ATCC 700860 / DSM 12428 / JCM 9974 / NBRC 100139 / OT-3).